Reading from the N-terminus, the 309-residue chain is UDP-3-O-acyl-N-acetylglucosamine deacetylase (309 aa).

Residues His78, His237, and Asp241 each coordinate Zn(2+). Residue His264 is the Proton donor of the active site.

The protein belongs to the LpxC family. Requires Zn(2+) as cofactor.

It catalyses the reaction a UDP-3-O-[(3R)-3-hydroxyacyl]-N-acetyl-alpha-D-glucosamine + H2O = a UDP-3-O-[(3R)-3-hydroxyacyl]-alpha-D-glucosamine + acetate. It participates in glycolipid biosynthesis; lipid IV(A) biosynthesis; lipid IV(A) from (3R)-3-hydroxytetradecanoyl-[acyl-carrier-protein] and UDP-N-acetyl-alpha-D-glucosamine: step 2/6. Functionally, catalyzes the hydrolysis of UDP-3-O-myristoyl-N-acetylglucosamine to form UDP-3-O-myristoylglucosamine and acetate, the committed step in lipid A biosynthesis. The sequence is that of UDP-3-O-acyl-N-acetylglucosamine deacetylase from Methylobacillus flagellatus (strain ATCC 51484 / DSM 6875 / VKM B-1610 / KT).